Here is a 540-residue protein sequence, read N- to C-terminus: Type II methyltransferase M.AccI (540 aa).

This sequence belongs to the N(4)/N(6)-methyltransferase family. As to quaternary structure, monomer.

The enzyme catalyses a 2'-deoxyadenosine in DNA + S-adenosyl-L-methionine = an N(6)-methyl-2'-deoxyadenosine in DNA + S-adenosyl-L-homocysteine + H(+). In terms of biological role, a gamma subtype methylase, recognizes the double-stranded sequence 5'-GTMKAC-3', methylates A-5 on both strands, and protects the DNA from cleavage by the AccI endonuclease. The sequence is that of Type II methyltransferase M.AccI (accIM) from Acinetobacter calcoaceticus.